Here is a 147-residue protein sequence, read N- to C-terminus: MSTYTPKAGDVTRTWHVIDATDVVLGRLAVQAANLLRGKHKPTFAPHVDGGDFVVIINAEKVAISGNKREGKFLYHHSGHPGGLKSRSVGEVLDKNPDRLVEKAIVGMLPKNKLGRAISSKLKVYAGPNHPHAAQQPVPFEIKQVAQ.

Belongs to the universal ribosomal protein uL13 family. Part of the 50S ribosomal subunit.

Its function is as follows. This protein is one of the early assembly proteins of the 50S ribosomal subunit, although it is not seen to bind rRNA by itself. It is important during the early stages of 50S assembly. The protein is Large ribosomal subunit protein uL13 of Rhodococcus jostii (strain RHA1).